A 376-amino-acid chain; its full sequence is Ribonucleoside-diphosphate reductase subunit beta (376 aa).

Asp-85, Glu-116, and His-119 together coordinate Fe cation. Residue Tyr-123 is part of the active site. The Fe cation site is built by Glu-205, Glu-239, and His-242.

The protein belongs to the ribonucleoside diphosphate reductase small chain family. As to quaternary structure, tetramer of two alpha and two beta subunits. It depends on Fe cation as a cofactor.

It catalyses the reaction a 2'-deoxyribonucleoside 5'-diphosphate + [thioredoxin]-disulfide + H2O = a ribonucleoside 5'-diphosphate + [thioredoxin]-dithiol. In terms of biological role, provides the precursors necessary for DNA synthesis. Catalyzes the biosynthesis of deoxyribonucleotides from the corresponding ribonucleotides. This Buchnera aphidicola subsp. Baizongia pistaciae (strain Bp) protein is Ribonucleoside-diphosphate reductase subunit beta (nrdB).